A 178-amino-acid chain; its full sequence is Probable DNA-directed RNA polymerase subunit delta (178 aa).

The region spanning 14–81 (LSLIDVAHFI…GNNTWGLRAW (68 aa)) is the HTH HARE-type domain. 2 disordered regions span residues 89 to 122 (EEVQ…DYDD) and 141 to 178 (LDED…PEDK). Acidic residues-rich tracts occupy residues 105–122 (DDDD…DYDD), 141–150 (LDEDEDDDDH), and 161–178 (TVED…PEDK).

This sequence belongs to the RpoE family. In terms of assembly, RNAP is composed of a core of 2 alpha, a beta and a beta' subunits. The core is associated with a delta subunit and one of several sigma factors.

Functionally, participates in both the initiation and recycling phases of transcription. In the presence of the delta subunit, RNAP displays an increased specificity of transcription, a decreased affinity for nucleic acids, and an increased efficiency of RNA synthesis because of enhanced recycling. The chain is Probable DNA-directed RNA polymerase subunit delta from Listeria innocua serovar 6a (strain ATCC BAA-680 / CLIP 11262).